Reading from the N-terminus, the 444-residue chain is Probable glycine dehydrogenase (decarboxylating) subunit 1 (444 aa).

The protein belongs to the GcvP family. N-terminal subunit subfamily. The glycine cleavage system is composed of four proteins: P, T, L and H. In this organism, the P 'protein' is a heterodimer of two subunits.

The catalysed reaction is N(6)-[(R)-lipoyl]-L-lysyl-[glycine-cleavage complex H protein] + glycine + H(+) = N(6)-[(R)-S(8)-aminomethyldihydrolipoyl]-L-lysyl-[glycine-cleavage complex H protein] + CO2. Its function is as follows. The glycine cleavage system catalyzes the degradation of glycine. The P protein binds the alpha-amino group of glycine through its pyridoxal phosphate cofactor; CO(2) is released and the remaining methylamine moiety is then transferred to the lipoamide cofactor of the H protein. The chain is Probable glycine dehydrogenase (decarboxylating) subunit 1 from Chlorobaculum parvum (strain DSM 263 / NCIMB 8327) (Chlorobium vibrioforme subsp. thiosulfatophilum).